Consider the following 336-residue polypeptide: Glyceraldehyde-3-phosphate dehydrogenase (336 aa).

Residues 12-13 (RI), aspartate 34, and arginine 79 each bind NAD(+). D-glyceraldehyde 3-phosphate is bound by residues 150–152 (SCT), threonine 181, 210–211 (TG), and arginine 233. The active-site Nucleophile is cysteine 151. An NAD(+)-binding site is contributed by asparagine 315.

This sequence belongs to the glyceraldehyde-3-phosphate dehydrogenase family. In terms of assembly, homotetramer.

The protein localises to the cytoplasm. The catalysed reaction is D-glyceraldehyde 3-phosphate + phosphate + NAD(+) = (2R)-3-phospho-glyceroyl phosphate + NADH + H(+). It participates in carbohydrate degradation; glycolysis; pyruvate from D-glyceraldehyde 3-phosphate: step 1/5. Involved in osmoadaptation. The polypeptide is Glyceraldehyde-3-phosphate dehydrogenase (gpdA) (Emericella nidulans (strain FGSC A4 / ATCC 38163 / CBS 112.46 / NRRL 194 / M139) (Aspergillus nidulans)).